We begin with the raw amino-acid sequence, 461 residues long: Argininosuccinate lyase (461 aa).

It belongs to the lyase 1 family. Argininosuccinate lyase subfamily.

It is found in the cytoplasm. It carries out the reaction 2-(N(omega)-L-arginino)succinate = fumarate + L-arginine. The protein operates within amino-acid biosynthesis; L-arginine biosynthesis; L-arginine from L-ornithine and carbamoyl phosphate: step 3/3. This Chloroflexus aurantiacus (strain ATCC 29366 / DSM 635 / J-10-fl) protein is Argininosuccinate lyase.